Consider the following 140-residue polypeptide: MIVVRKALPEEHKEILQVAKQSKYTKDFSNQVMFSSEAAYNKGWIHVAEHEGEIRGFYCIREKVRAPETVLYFIGVAQEAKGLGLGKKLIEHIMATTRHRRLTLNVNKQNEEARAFYDRLGFTVAGESLGGEGLALFKEW.

The N-acetyltransferase domain maps to 2 to 140; the sequence is IVVRKALPEE…GEGLALFKEW (139 aa).

It belongs to the acetyltransferase family.

The catalysed reaction is 5-aminomethyl-dUMP in DNA + acetyl-CoA = 5-acetylaminomethyl-dUMP in DNA + CoA + H(+). Functionally, acetylates 5-aminomethyl-2'-deoxyuridine (5-NmdU) to produce 5-acetylaminomethyl-2'-deoxyuridine (5-AcNmdU) on DNA as a step in the pathway leading to thymidine hypermodifications in the viral genome. As a final result of the pathway of hypermodification, 5-acetylaminomethyl-2'-deoxyuridine (5-AcNmdU) substitutes for a subset of thymidines in the viral DNA. These modifications probably prevent degradation of viral genome by the host restriction-modification antiviral defense system. This is 5-NmdU N-acetyltransferase from Pseudomonas aeruginosa.